The sequence spans 755 residues: Polyribonucleotide nucleotidyltransferase (755 aa).

Mg(2+)-binding residues include D493 and D499. The KH domain occupies 560–619; that stretch reads PRIMTIQIPVDKIGALIGPGGKTIRNICETTGAQIDIEDDGRVFITTPDGAAARQAISMI. Positions 629–698 constitute an S1 motif domain; it reads GDIFLGKVVS…TTGKISLSRR (70 aa). Positions 699-755 are disordered; the sequence is AVLTGETPEERKAAGAAPRPRPREEQRGGRDEPRSLRDELRGPRREGDRPRPRRRDD. A compositionally biased stretch (basic and acidic residues) spans 719-755; that stretch reads RPREEQRGGRDEPRSLRDELRGPRREGDRPRPRRRDD.

The protein belongs to the polyribonucleotide nucleotidyltransferase family. Mg(2+) serves as cofactor.

The protein resides in the cytoplasm. It carries out the reaction RNA(n+1) + phosphate = RNA(n) + a ribonucleoside 5'-diphosphate. Involved in mRNA degradation. Catalyzes the phosphorolysis of single-stranded polyribonucleotides processively in the 3'- to 5'-direction. The chain is Polyribonucleotide nucleotidyltransferase from Chloroflexus aurantiacus (strain ATCC 29366 / DSM 635 / J-10-fl).